The primary structure comprises 572 residues: Probable pyruvate decarboxylase C186.09 (572 aa).

Substrate-binding residues include Asp38 and His125. The interval 400 to 482 (DSWFGGMRIT…FLINNRGYTI (83 aa)) is thiamine pyrophosphate binding. The Mg(2+) site is built by Asp450, Asn477, and Gly479. Glu483 is a substrate binding site.

The protein belongs to the TPP enzyme family. Homotetramer. It depends on a metal cation as a cofactor. The cofactor is thiamine diphosphate.

It carries out the reaction a 2-oxocarboxylate + H(+) = an aldehyde + CO2. The polypeptide is Probable pyruvate decarboxylase C186.09 (Schizosaccharomyces pombe (strain 972 / ATCC 24843) (Fission yeast)).